A 215-amino-acid chain; its full sequence is 3-isopropylmalate dehydratase small subunit (215 aa).

It belongs to the LeuD family. LeuD type 1 subfamily. Heterodimer of LeuC and LeuD.

The enzyme catalyses (2R,3S)-3-isopropylmalate = (2S)-2-isopropylmalate. Its pathway is amino-acid biosynthesis; L-leucine biosynthesis; L-leucine from 3-methyl-2-oxobutanoate: step 2/4. Catalyzes the isomerization between 2-isopropylmalate and 3-isopropylmalate, via the formation of 2-isopropylmaleate. This chain is 3-isopropylmalate dehydratase small subunit, found in Chromohalobacter salexigens (strain ATCC BAA-138 / DSM 3043 / CIP 106854 / NCIMB 13768 / 1H11).